The primary structure comprises 180 residues: MALSREETARRYGTAIFDFAKDSGKTELMYSELTELKKAVQAEPRFVQVLSNPVLDAKQKKSLLTAVEQGFSAELQEVLNFLLSYDRFDNLVDIIDYYIHLYNAANHIGTGVAKTALKPDEDQLQRLADSYAKKYGLQALHLENEVDPEIIGGVVLEVEGRVIDGSVKHRLEKIRAMLTK.

The protein belongs to the ATPase delta chain family. As to quaternary structure, F-type ATPases have 2 components, F(1) - the catalytic core - and F(0) - the membrane proton channel. F(1) has five subunits: alpha(3), beta(3), gamma(1), delta(1), epsilon(1). F(0) has three main subunits: a(1), b(2) and c(10-14). The alpha and beta chains form an alternating ring which encloses part of the gamma chain. F(1) is attached to F(0) by a central stalk formed by the gamma and epsilon chains, while a peripheral stalk is formed by the delta and b chains.

Its subcellular location is the cell membrane. In terms of biological role, f(1)F(0) ATP synthase produces ATP from ADP in the presence of a proton or sodium gradient. F-type ATPases consist of two structural domains, F(1) containing the extramembraneous catalytic core and F(0) containing the membrane proton channel, linked together by a central stalk and a peripheral stalk. During catalysis, ATP synthesis in the catalytic domain of F(1) is coupled via a rotary mechanism of the central stalk subunits to proton translocation. Functionally, this protein is part of the stalk that links CF(0) to CF(1). It either transmits conformational changes from CF(0) to CF(1) or is implicated in proton conduction. The polypeptide is ATP synthase subunit delta (Lactobacillus delbrueckii subsp. bulgaricus (strain ATCC BAA-365 / Lb-18)).